Reading from the N-terminus, the 159-residue chain is Regulator of G-protein signaling 13 (159 aa).

Positions Ser-34–Leu-150 constitute an RGS domain.

In terms of biological role, inhibits signal transduction by increasing the GTPase activity of G protein alpha subunits thereby driving them into their inactive GDP-bound form. Binds to both G(i)-alpha and G(q)-alpha. This is Regulator of G-protein signaling 13 (RGS13) from Homo sapiens (Human).